A 273-amino-acid chain; its full sequence is MAVGVFDSGLGGLTVLDAVSRRLPEVPFVYYGDNLHAPYGVRDAEDVYELTTGAVSRLWDEGCDLVILACNTASAAALRRMQESWVPSDKRVLGVFVPLIEALTERQWGDNSPPREVAIKHVALFATPATVSSRAFQRELAFRAIGVDVEAQPCGGVVDAIEDGDMILAEALVRSHVEALKRRMPHPEAAILGCTHYPLMQDVFQDALGADVKVYSQAQLVAESLADYLTRHPDMLGLGAEPGFLTTGDPKSVSNKATQFLRRKIEFRAVEPL.

Substrate is bound by residues 7–8 (DS) and 39–40 (YG). Cys-70 serves as the catalytic Proton donor/acceptor. 71–72 (NT) lines the substrate pocket. Cys-194 acts as the Proton donor/acceptor in catalysis. 195-196 (TH) serves as a coordination point for substrate.

This sequence belongs to the aspartate/glutamate racemases family.

It carries out the reaction L-glutamate = D-glutamate. It participates in cell wall biogenesis; peptidoglycan biosynthesis. In terms of biological role, provides the (R)-glutamate required for cell wall biosynthesis. The protein is Glutamate racemase of Dinoroseobacter shibae (strain DSM 16493 / NCIMB 14021 / DFL 12).